Consider the following 678-residue polypeptide: Protein distal antenna (678 aa).

Positions 7-58 constitute an HTH psq-type domain; it reads TKGKRPLRSLTPRDKIHAIQRIHDGESKASVARDIGVPESTLRGWCKNEDKL. A DNA-binding region (H-T-H motif) is located at residues 34–54; it reads KASVARDIGVPESTLRGWCKN. 5 disordered regions span residues 232-310, 344-381, 445-528, 541-592, and 645-678; these read GAGN…GGPM, GVTSPPIRSSTPQHMSQLAQTPPIPSAPLTPSSTPSGS, KETE…TSEC, GMEA…DEEE, and NETPMIEKSALPEDSEEHAAEEEGSGRGKSRRRK. 2 stretches are compositionally biased toward polar residues: residues 241–254 and 349–363; these read PSGQTPLQVQSPRS and PIRSSTPQHMSQLAQ. 2 positions are modified to phosphoserine: S251 and S254. Low complexity predominate over residues 372 to 381; the sequence is LTPSSTPSGS. The segment covering 449–461 has biased composition (polar residues); it reads TPSVRSLSSNEQN. Residues 462 to 478 show a composition bias toward acidic residues; it reads PEADEATETDLDGEVEP. Residues 495-508 show a composition bias toward polar residues; that stretch reads TPSQSPIAHSSGSR. Low complexity predominate over residues 570–586; sequence NNNDVSASNNNNNNNSN. Residues 657-667 show a composition bias toward acidic residues; sequence EDSEEHAAEEE.

Homomers. Interacts with itself, danr, ey and dac to form a complex (or complexes) containing the RD factors. In terms of tissue distribution, coexpressed with danr in the presumptive distal antenna, but not in the leg imaginal disk. Both proteins are also expressed in the brain and the eye region of the eye-antenna disk. First detected in early L3 eye disks in cells surrounding the newly initiated MF. Levels are uniform and high anterior to the furrow, lower levels within and posterior to the furrow. Limited expression is seen in small groups of cells in leg and wing. These appear in the location of prominent sense organ progenitors at relatively late stages of disk development.

It is found in the nucleus. Its function is as follows. Probable transcription factor with a role in the retinal determination (RD) network. Regulates ato expression and is required for normal R8 induction and differentiation. Danr appears to repress Dan expression, but Dan is required for Danr expression anterior to the morphogenetic furrow (MF). Dan and Danr lie downstream of so and require dac function for highest levels of expression. Contributes to differentiation of antenna-specific characteristics; effector gene that acts downstream of homothorax (hth), Distal-less (Dll), cut (ct) and spineless (ss) genes to control differentiation of distal antennal structures. This Drosophila melanogaster (Fruit fly) protein is Protein distal antenna.